A 464-amino-acid polypeptide reads, in one-letter code: Glutamyl-tRNA reductase (464 aa).

Residues 47–50 (TCNR), Ser-145, 150–152 (EPQ), and Gln-156 contribute to the substrate site. The active-site Nucleophile is the Cys-48. Residue 225-230 (AAGEMN) participates in NADP(+) binding.

The protein belongs to the glutamyl-tRNA reductase family. In terms of assembly, homodimer.

The catalysed reaction is (S)-4-amino-5-oxopentanoate + tRNA(Glu) + NADP(+) = L-glutamyl-tRNA(Glu) + NADPH + H(+). Its pathway is porphyrin-containing compound metabolism; protoporphyrin-IX biosynthesis; 5-aminolevulinate from L-glutamyl-tRNA(Glu): step 1/2. Catalyzes the NADPH-dependent reduction of glutamyl-tRNA(Glu) to glutamate 1-semialdehyde (GSA). The polypeptide is Glutamyl-tRNA reductase (Psychrobacter cryohalolentis (strain ATCC BAA-1226 / DSM 17306 / VKM B-2378 / K5)).